Reading from the N-terminus, the 136-residue chain is Piercer of microtubule wall 1 protein (136 aa).

The disordered stretch occupies residues 1–24 (MAEECPRACAEPVAPKATAPPERT).

It belongs to the PIERCE1 family. In terms of assembly, microtubule inner protein component of sperm flagellar doublet microtubules. Interacts with CFAP53, ODAD1 and ODAD3; the interactions link the outer dynein arms docking complex (ODA-DC) to the internal microtubule inner proteins (MIP) in cilium axoneme. Expressed in airway epithelial cells.

The protein localises to the cytoplasm. The protein resides in the cytoskeleton. Its subcellular location is the cilium axoneme. It localises to the flagellum axoneme. Its function is as follows. Microtubule inner protein involved in the attachment of outer dynein arms (ODAs) to dynein-decorated doublet microtubules (DMTs) in cilia axoneme, which is required for motile cilia beating. Functions at the initial step of left-right asymmetry specification of the visceral organs. In Homo sapiens (Human), this protein is Piercer of microtubule wall 1 protein.